Reading from the N-terminus, the 553-residue chain is Phenylalanine--tRNA ligase alpha subunit (553 aa).

L-phenylalanine-binding residues include T400 and F479. E481 serves as a coordination point for Mg(2+).

It belongs to the class-II aminoacyl-tRNA synthetase family. Phe-tRNA synthetase alpha subunit type 2 subfamily. In terms of assembly, tetramer of two alpha and two beta subunits. Mg(2+) serves as cofactor.

The protein localises to the cytoplasm. It catalyses the reaction tRNA(Phe) + L-phenylalanine + ATP = L-phenylalanyl-tRNA(Phe) + AMP + diphosphate + H(+). The chain is Phenylalanine--tRNA ligase alpha subunit from Treponema pallidum (strain Nichols).